A 291-amino-acid chain; its full sequence is MMTQSIRRSMLTVMATLPLLFSSATLHAQANSVQQQLEALEKSSGGRLGVAQINTADNSQILYVADERFAMCSTSKVMAAAAVLKQSESDKHLLNQRVEIRASDLVNYNPIAEKHVNGTMTLAELGAGALQYSDNTAMNKLIAHLGGPDKVTAFARSLGDETFRLDRTEPTLNSAIPGDPRDTTTPLAMAQTLKNLTLGKALAETQRAQLVTWLKGNTTGSASIRAGMPKSWGVGDKTGSGDYGTTNDIAVIWPENHAPLVLVTYFTQPEQKAESRRDILAAAAKIVTHGF.

A signal peptide spans 1 to 28 (MMTQSIRRSMLTVMATLPLLFSSATLHA). Residue Ser-73 is the Acyl-ester intermediate of the active site. 237–239 (KTG) provides a ligand contact to substrate.

This sequence belongs to the class-A beta-lactamase family.

It catalyses the reaction a beta-lactam + H2O = a substituted beta-amino acid. Functionally, has cefotaxime-hydrolyzing activity. In Salmonella typhimurium, this protein is Beta-lactamase CTX-M-4 (bla).